The sequence spans 141 residues: Nucleoside diphosphate kinase (141 aa).

6 residues coordinate ATP: lysine 11, phenylalanine 59, arginine 87, threonine 93, arginine 104, and asparagine 114. Histidine 117 acts as the Pros-phosphohistidine intermediate in catalysis.

Belongs to the NDK family. In terms of assembly, homotetramer. It depends on Mg(2+) as a cofactor.

It localises to the cytoplasm. It carries out the reaction a 2'-deoxyribonucleoside 5'-diphosphate + ATP = a 2'-deoxyribonucleoside 5'-triphosphate + ADP. It catalyses the reaction a ribonucleoside 5'-diphosphate + ATP = a ribonucleoside 5'-triphosphate + ADP. In terms of biological role, major role in the synthesis of nucleoside triphosphates other than ATP. The ATP gamma phosphate is transferred to the NDP beta phosphate via a ping-pong mechanism, using a phosphorylated active-site intermediate. In Vibrio campbellii (strain ATCC BAA-1116), this protein is Nucleoside diphosphate kinase.